Here is a 176-residue protein sequence, read N- to C-terminus: Flavodoxin 1 (176 aa).

Positions 4–165 (TGIFFGSDTG…RVEKWVKQIS (162 aa)) constitute a Flavodoxin-like domain.

It belongs to the flavodoxin family. FMN is required as a cofactor.

Low-potential electron donor to a number of redox enzymes (Potential). Involved in the reactivation of inactive cob(II)alamin in methionine synthase. The chain is Flavodoxin 1 (fldA) from Escherichia coli O157:H7.